Consider the following 317-residue polypeptide: Transaldolase (317 aa).

The active-site Schiff-base intermediate with substrate is Lys132.

It belongs to the transaldolase family. Type 1 subfamily. In terms of assembly, homodimer.

The protein resides in the cytoplasm. The catalysed reaction is D-sedoheptulose 7-phosphate + D-glyceraldehyde 3-phosphate = D-erythrose 4-phosphate + beta-D-fructose 6-phosphate. It participates in carbohydrate degradation; pentose phosphate pathway; D-glyceraldehyde 3-phosphate and beta-D-fructose 6-phosphate from D-ribose 5-phosphate and D-xylulose 5-phosphate (non-oxidative stage): step 2/3. In terms of biological role, transaldolase is important for the balance of metabolites in the pentose-phosphate pathway. The protein is Transaldolase of Yersinia pseudotuberculosis serotype IB (strain PB1/+).